A 378-amino-acid polypeptide reads, in one-letter code: Lipid-A-disaccharide synthase (378 aa).

It belongs to the LpxB family.

The catalysed reaction is a lipid X + a UDP-2-N,3-O-bis[(3R)-3-hydroxyacyl]-alpha-D-glucosamine = a lipid A disaccharide + UDP + H(+). The protein operates within bacterial outer membrane biogenesis; LPS lipid A biosynthesis. Condensation of UDP-2,3-diacylglucosamine and 2,3-diacylglucosamine-1-phosphate to form lipid A disaccharide, a precursor of lipid A, a phosphorylated glycolipid that anchors the lipopolysaccharide to the outer membrane of the cell. The polypeptide is Lipid-A-disaccharide synthase (Pseudomonas aeruginosa (strain UCBPP-PA14)).